The following is a 438-amino-acid chain: MGNTSIQTQSYRAVDKDAGQSRSYIIPFALLCSLFFLWAVANNLNDILLPQFQQAFTLTNFQAGLIQSAFYFGYFIIPIPAGILMKKLSYKAGIITGLFLYALGAALFWPAAEIMNYTLFLVGLFIIAAGLGCLETAANPFVTVLGPESSGHFRLNLAQTFNSFGAIIAVVFGQSLILSNVPHQSQDVLDKMSPEQLSAYKHSLVLSVQTPYMIIVAIVLLVALLIMLTKFPALQSDNHSDAKQGSFSASLSRLARIRHWRWAVLAQFCYVGAQTACWSYLIRYAVEEIPGMTAGFAANYLTGTMVCFFIGRFTGTWLISRFAPHKVLAAYALIAMALCLISAFAGGHVGLIALTLCSAFMSIQYPTIFSLGIKNLGQDTKYGSSFIVMTIIGGGIVTPVMGFVSDAAGNIPTAELIPALCFAVIFIFARFRSQTATN.

Over 2 to 26 (GNTSIQTQSYRAVDKDAGQSRSYII) the chain is Cytoplasmic. A helical transmembrane segment spans residues 27–53 (PFALLCSLFFLWAVANNLNDILLPQFQ). The Periplasmic portion of the chain corresponds to 54 to 61 (QAFTLTNF). A helical membrane pass occupies residues 62–87 (QAGLIQSAFYFGYFIIPIPAGILMKK). The Cytoplasmic segment spans residues 88-90 (LSY). The chain crosses the membrane as a helical span at residues 91-113 (KAGIITGLFLYALGAALFWPAAE). At 114 to 117 (IMNY) the chain is on the periplasmic side. A helical transmembrane segment spans residues 118–144 (TLFLVGLFIIAAGLGCLETAANPFVTV). Over 145-150 (LGPESS) the chain is Cytoplasmic. The helical transmembrane segment at 151–178 (GHFRLNLAQTFNSFGAIIAVVFGQSLIL) threads the bilayer. Residues 179–193 (SNVPHQSQDVLDKMS) are Periplasmic-facing. Residues 194–227 (PEQLSAYKHSLVLSVQTPYMIIVAIVLLVALLIM) traverse the membrane as a helical segment. Topologically, residues 228 to 257 (LTKFPALQSDNHSDAKQGSFSASLSRLARI) are cytoplasmic. Residues 258–287 (RHWRWAVLAQFCYVGAQTACWSYLIRYAVE) traverse the membrane as a helical segment. The Periplasmic segment spans residues 288 to 293 (EIPGMT). The helical transmembrane segment at 294 to 319 (AGFAANYLTGTMVCFFIGRFTGTWLI) threads the bilayer. The Cytoplasmic portion of the chain corresponds to 320-324 (SRFAP). The helical transmembrane segment at 325-343 (HKVLAAYALIAMALCLISA) threads the bilayer. Topologically, residues 344 to 347 (FAGG) are periplasmic. The helical transmembrane segment at 348–372 (HVGLIALTLCSAFMSIQYPTIFSLG) threads the bilayer. The Cytoplasmic portion of the chain corresponds to 373-379 (IKNLGQD). Residues 380-407 (TKYGSSFIVMTIIGGGIVTPVMGFVSDA) traverse the membrane as a helical segment. Topologically, residues 408 to 410 (AGN) are periplasmic. Residues 411–430 (IPTAELIPALCFAVIFIFAR) traverse the membrane as a helical segment. Residues 431-438 (FRSQTATN) are Cytoplasmic-facing.

The protein belongs to the major facilitator superfamily. FHS transporter (TC 2.A.1.7) family.

Its subcellular location is the cell inner membrane. The enzyme catalyses L-fucose(in) + H(+)(in) = L-fucose(out) + H(+)(out). It carries out the reaction D-arabinose(out) + H(+)(out) = D-arabinose(in) + H(+)(in). The catalysed reaction is L-galactose(out) + H(+)(out) = L-galactose(in) + H(+)(in). Its function is as follows. Mediates the uptake of L-fucose across the boundary membrane with the concomitant transport of protons into the cell (symport system). Can also transport L-galactose and D-arabinose, but at reduced rates compared with L-fucose. Is not able to transport L-rhamnose and L-arabinose. Binds D-arabinose with the highest affinity, followed by L-fucose, and then by L-galactose. The chain is L-fucose-proton symporter (fucP) from Escherichia coli (strain K12).